We begin with the raw amino-acid sequence, 309 residues long: uncharacterized protein (309 aa).

Helical transmembrane passes span 28–48 (IIAL…IMKP), 73–93 (MMLN…VIGW), 113–133 (LIVI…LLPI), 157–177 (ITAF…YFHS), 220–240 (FVVI…AALF), and 259–279 (IFAV…ILIL).

It localises to the cell membrane. This is an uncharacterized protein from Bacillus subtilis (strain 168).